Here is a 239-residue protein sequence, read N- to C-terminus: 7-cyano-7-deazaguanine synthase (239 aa).

Residue 8–18 (FSGGLDSTACL) coordinates ATP. Positions 194, 209, 212, and 215 each coordinate Zn(2+).

This sequence belongs to the QueC family. Zn(2+) is required as a cofactor.

The enzyme catalyses 7-carboxy-7-deazaguanine + NH4(+) + ATP = 7-cyano-7-deazaguanine + ADP + phosphate + H2O + H(+). It participates in purine metabolism; 7-cyano-7-deazaguanine biosynthesis. In terms of biological role, catalyzes the ATP-dependent conversion of 7-carboxy-7-deazaguanine (CDG) to 7-cyano-7-deazaguanine (preQ(0)). The polypeptide is 7-cyano-7-deazaguanine synthase (Pyrococcus horikoshii (strain ATCC 700860 / DSM 12428 / JCM 9974 / NBRC 100139 / OT-3)).